A 471-amino-acid polypeptide reads, in one-letter code: MGKTLYEKVYDAHVAVAAEGETPILYIDRHLVHEVTSPQAFDGLREKGRKVRQVSKTFATMDHNVSTTTKDINASGEMARIQMETLSKNCEEFGVTLYDLNHKYQGIVHVMGPELGITLPGMTIVCGDSHTATHGAFGSLAFGIGTSEVEHVLATQTLKQARAKTMKIEVKGKVAPGITAKDIVLAIIGKTTAAGGTGYVVEFCGEAITDLSMEGRMTVCNMAIELGAKAGLIAPDETTFEYIKGRKFSPQGADFDAAVEYWKTLKTDADAEFDAVVTLNAADIKPQVTWGTNPGQVIAVDQPIPAPESFTDPIEKASAEKALAYMGLEAGKSLSDYQVNKVFVGSCTNSRIEDMRAAAVVAKGRKVASHVQALIVPGSEQVKAQAEAEGLDVIFKEAGFEWRLPGCSMCLAMNNDRLGPHERCASTSNRNFEGRQGRDGRTHLVSPAMAAAAAIAGHFVDIRELTFDKQD.

The [4Fe-4S] cluster site is built by C347, C407, and C410.

It belongs to the aconitase/IPM isomerase family. LeuC type 1 subfamily. As to quaternary structure, heterodimer of LeuC and LeuD. Requires [4Fe-4S] cluster as cofactor.

The enzyme catalyses (2R,3S)-3-isopropylmalate = (2S)-2-isopropylmalate. It functions in the pathway amino-acid biosynthesis; L-leucine biosynthesis; L-leucine from 3-methyl-2-oxobutanoate: step 2/4. Its function is as follows. Catalyzes the isomerization between 2-isopropylmalate and 3-isopropylmalate, via the formation of 2-isopropylmaleate. This chain is 3-isopropylmalate dehydratase large subunit, found in Vibrio parahaemolyticus serotype O3:K6 (strain RIMD 2210633).